Here is a 307-residue protein sequence, read N- to C-terminus: UDP-N-acetylenolpyruvoylglucosamine reductase (307 aa).

The FAD-binding PCMH-type domain occupies 33–197; the sequence is TGGNADFYIT…LEAAFTLAPG (165 aa). R176 is an active-site residue. The Proton donor role is filled by S226. E296 is an active-site residue.

The protein belongs to the MurB family. The cofactor is FAD.

It localises to the cytoplasm. The catalysed reaction is UDP-N-acetyl-alpha-D-muramate + NADP(+) = UDP-N-acetyl-3-O-(1-carboxyvinyl)-alpha-D-glucosamine + NADPH + H(+). Its pathway is cell wall biogenesis; peptidoglycan biosynthesis. In terms of biological role, cell wall formation. The polypeptide is UDP-N-acetylenolpyruvoylglucosamine reductase (Staphylococcus aureus (strain COL)).